A 397-amino-acid chain; its full sequence is Phosphoglycerate kinase (397 aa).

Substrate is bound by residues 25–27 (DLN), Arg41, 64–67 (HLGR), Arg118, and Arg151. ATP is bound by residues Lys202, Glu324, and 350 to 353 (GGDT).

It belongs to the phosphoglycerate kinase family. Monomer.

The protein resides in the cytoplasm. It carries out the reaction (2R)-3-phosphoglycerate + ATP = (2R)-3-phospho-glyceroyl phosphate + ADP. The protein operates within carbohydrate degradation; glycolysis; pyruvate from D-glyceraldehyde 3-phosphate: step 2/5. This Acidovorax sp. (strain JS42) protein is Phosphoglycerate kinase.